The chain runs to 307 residues: Phosphonates import ATP-binding protein PhnC (307 aa).

The region spanning 4 to 252 (IRIERLSKTF…RLHALYGDDA (249 aa)) is the ABC transporter domain. Position 37–44 (37–44 (GASGSGKS)) interacts with ATP. Residues 265-275 (AAREAAGEPAR) show a composition bias toward basic and acidic residues. Residues 265–307 (AAREAAGEPARRAPAAFDSAGSPDLPDSQPASPRRMLAASSMR) are disordered.

Belongs to the ABC transporter superfamily. Phosphonates importer (TC 3.A.1.9.1) family. As to quaternary structure, the complex is composed of two ATP-binding proteins (PhnC), two transmembrane proteins (PhnE) and a solute-binding protein (PhnD).

It is found in the cell inner membrane. The enzyme catalyses phosphonate(out) + ATP + H2O = phosphonate(in) + ADP + phosphate + H(+). Its function is as follows. Part of the ABC transporter complex PhnCDE involved in phosphonates import. Responsible for energy coupling to the transport system. The chain is Phosphonates import ATP-binding protein PhnC from Burkholderia pseudomallei (strain 1710b).